The sequence spans 358 residues: DNA integrity scanning protein DisA (358 aa).

One can recognise a DAC domain in the interval 6-144 (RPTLREAVAR…RGERHVLTDS (139 aa)). ATP is bound by residues Gly-73, Leu-91, and 104–108 (TRHRS).

It belongs to the DisA family. In terms of assembly, homooctamer. The cofactor is Mg(2+).

It carries out the reaction 2 ATP = 3',3'-c-di-AMP + 2 diphosphate. In terms of biological role, participates in a DNA-damage check-point. DisA forms globular foci that rapidly scan along the chromosomes searching for lesions. Also has diadenylate cyclase activity, catalyzing the condensation of 2 ATP molecules into cyclic di-AMP (c-di-AMP). c-di-AMP likely acts as a signaling molecule that may couple DNA integrity with a cellular process. In Mycobacterium bovis (strain ATCC BAA-935 / AF2122/97), this protein is DNA integrity scanning protein DisA.